The sequence spans 168 residues: MSVANSRTAVYPGTFDPITNGHIDLVNRAAPLFERVVVGVAYSPSKGPALSLERRVALAQEALAAHTNVEVRGFDTLLAHFVREMGAGVLLRGLRAVSDFEYEFQMASMNRHLIPEVETLFLTPAEQYSFISSSLVREIARLGGDVSGFVPASVVEALRQVRQSRAQA.

Thr14 contacts substrate. ATP is bound by residues 14-15 and His22; that span reads TF. Residues Lys46, Leu78, and Arg92 each contribute to the substrate site. ATP is bound by residues 93–95, Glu103, and 128–134; these read GLR and YSFISSS.

Belongs to the bacterial CoaD family. As to quaternary structure, homohexamer. It depends on Mg(2+) as a cofactor.

It localises to the cytoplasm. It carries out the reaction (R)-4'-phosphopantetheine + ATP + H(+) = 3'-dephospho-CoA + diphosphate. It functions in the pathway cofactor biosynthesis; coenzyme A biosynthesis; CoA from (R)-pantothenate: step 4/5. Reversibly transfers an adenylyl group from ATP to 4'-phosphopantetheine, yielding dephospho-CoA (dPCoA) and pyrophosphate. The sequence is that of Phosphopantetheine adenylyltransferase from Xanthomonas euvesicatoria pv. vesicatoria (strain 85-10) (Xanthomonas campestris pv. vesicatoria).